A 386-amino-acid polypeptide reads, in one-letter code: D(1)-like dopamine receptor (386 aa).

The segment covering 1–10 has biased composition (polar residues); that stretch reads MEIFTTTRGT. A disordered region spans residues 1 to 28; that stretch reads MEIFTTTRGTSAGPEPAPGGHGGTDSPR. Over 1-35 the chain is Extracellular; that stretch reads MEIFTTTRGTSAGPEPAPGGHGGTDSPRTSDLSLR. Residues 36 to 56 traverse the membrane as a helical segment; it reads ALTGCVLCILIVSTLLGNALV. The Cytoplasmic portion of the chain corresponds to 57-72; it reads CAAVIKFRHLRSKVTN. The chain crosses the membrane as a helical span at residues 73–92; sequence AFVISLAVSDLFVAVLVMPW. Residues 93-109 lie on the Extracellular side of the membrane; sequence RAVSEVAGVWLFGAFCD. An intrachain disulfide couples Cys-108 to Cys-188. A helical transmembrane segment spans residues 110-131; the sequence is TWVAFDIMCSTASILHLCIISM. At 132–150 the chain is on the cytoplasmic side; sequence DRYWAISSPFRYERRMTPR. The helical transmembrane segment at 151 to 175 threads the bilayer; the sequence is FGCVMIGVAWTLSVLISFIPVQLNW. At 176–195 the chain is on the extracellular side; it reads HARGRERTDPGDCNASLNRT. Residues Asn-189 and Asn-193 are each glycosylated (N-linked (GlcNAc...) asparagine). A helical transmembrane segment spans residues 196-220; the sequence is YAISSSLISFYIPVLIMVGTYTRIF. Over 221–266 the chain is Cytoplasmic; it reads RIGRTQIRRISSLERAAPRATRGPALCDEESSLKTSFRRETKVLKT. Residues 267–292 form a helical membrane-spanning segment; sequence LSVIMGVFVFCWLPFFVLNCMVPFCR. At 293–305 the chain is on the extracellular side; it reads LEPAAAPCVSDTT. Residues 306–325 traverse the membrane as a helical segment; the sequence is FSVFVWFGWANSSLNPVIYA. Residues 326–386 are Cytoplasmic-facing; sequence FNADFRKAFS…SRGGPYQFAL (61 aa).

The protein belongs to the G-protein coupled receptor 1 family.

The protein resides in the cell membrane. It localises to the cell projection. The protein localises to the cilium membrane. Functionally, this is one of the five types (D1 to D5) of receptors for dopamine. The activity of this receptor is mediated by G proteins which activate adenylyl cyclase. This is D(1)-like dopamine receptor from Oreochromis mossambicus (Mozambique tilapia).